A 689-amino-acid polypeptide reads, in one-letter code: Methionine--tRNA ligase (689 aa).

Positions 13-23 match the 'HIGH' region motif; the sequence is PYANGNFHIGH. Zn(2+) is bound by residues Cys-144, Cys-147, Cys-157, and Cys-160. Positions 341 to 345 match the 'KMSKS' region motif; that stretch reads KMSKS. Lys-344 contacts ATP. The tRNA-binding domain occupies 583–689; that stretch reads DFAKVDLRIA…PGASPGLRVR (107 aa).

Belongs to the class-I aminoacyl-tRNA synthetase family. MetG type 1 subfamily. As to quaternary structure, homodimer. Zn(2+) serves as cofactor.

The protein localises to the cytoplasm. It carries out the reaction tRNA(Met) + L-methionine + ATP = L-methionyl-tRNA(Met) + AMP + diphosphate. Functionally, is required not only for elongation of protein synthesis but also for the initiation of all mRNA translation through initiator tRNA(fMet) aminoacylation. The polypeptide is Methionine--tRNA ligase (Polaromonas sp. (strain JS666 / ATCC BAA-500)).